A 95-amino-acid chain; its full sequence is Small ribosomal subunit protein bS16 (95 aa).

Belongs to the bacterial ribosomal protein bS16 family.

This chain is Small ribosomal subunit protein bS16, found in Mycoplasma genitalium (strain ATCC 33530 / DSM 19775 / NCTC 10195 / G37) (Mycoplasmoides genitalium).